The primary structure comprises 908 residues: UPF0182 protein Csac_0864 (908 aa).

7 consecutive transmembrane segments (helical) span residues 22-42, 62-82, 98-118, 166-186, 208-228, 253-273, and 286-306; these read FVIS…DLFL, FYVK…VFFV, ISLL…ALIA, FLFY…IVLY, HIFF…KYEM, YFRL…YFFI, and SYIG…YFVV.

This sequence belongs to the UPF0182 family.

Its subcellular location is the cell membrane. The chain is UPF0182 protein Csac_0864 from Caldicellulosiruptor saccharolyticus (strain ATCC 43494 / DSM 8903 / Tp8T 6331).